Here is a 216-residue protein sequence, read N- to C-terminus: U1 small nuclear ribonucleoprotein C (216 aa).

A Matrin-type zinc finger spans residues 4-36 (FFCDYCDVYLTHDSMSVRKAHNSGRNHLRNVVD). Disordered stretches follow at residues 70–89 (PQNQ…PGAG) and 125–216 (PGGI…ADKR). 2 stretches are compositionally biased toward pro residues: residues 140-149 (PPMPPFPGMP) and 157-204 (GVPP…PPFG).

The protein belongs to the U1 small nuclear ribonucleoprotein C family. As to quaternary structure, U1 snRNP is composed of the 7 core Sm proteins B/B', D1, D2, D3, E, F and G that assemble in a heptameric protein ring on the Sm site of the small nuclear RNA to form the core snRNP, and at least 3 U1 snRNP-specific proteins U1-70K, U1-A and U1-C. U1-C interacts with U1 snRNA and the 5' splice-site region of the pre-mRNA.

It is found in the nucleus. Its function is as follows. Component of the spliceosomal U1 snRNP, which is essential for recognition of the pre-mRNA 5' splice-site and the subsequent assembly of the spliceosome. U1-C is directly involved in initial 5' splice-site recognition for both constitutive and regulated alternative splicing. The interaction with the 5' splice-site seems to precede base-pairing between the pre-mRNA and the U1 snRNA. Stimulates commitment or early (E) complex formation by stabilizing the base pairing of the 5' end of the U1 snRNA and the 5' splice-site region. This chain is U1 small nuclear ribonucleoprotein C, found in Neurospora crassa (strain ATCC 24698 / 74-OR23-1A / CBS 708.71 / DSM 1257 / FGSC 987).